The chain runs to 249 residues: Bax inhibitor 1 (249 aa).

The next 6 helical transmembrane spans lie at 39–59, 65–85, 93–113, 119–139, 151–171, and 213–233; these read LVYL…YLHV, GMLT…VPVF, ILLA…KLAV, ILVT…CAAI, GLLS…SIFG, and HALT…VIML.

The protein belongs to the BI1 family. In terms of tissue distribution, ubiquitous.

The protein resides in the membrane. Suppressor of apoptosis. In Oryza sativa subsp. japonica (Rice), this protein is Bax inhibitor 1 (BI1).